The primary structure comprises 238 residues: Large ribosomal subunit protein uL3 (238 aa).

Gln157 carries the N5-methylglutamine modification.

The protein belongs to the universal ribosomal protein uL3 family. As to quaternary structure, part of the 50S ribosomal subunit. Forms a cluster with proteins L14 and L19. In terms of processing, methylated by PrmB.

In terms of biological role, one of the primary rRNA binding proteins, it binds directly near the 3'-end of the 23S rRNA, where it nucleates assembly of the 50S subunit. This is Large ribosomal subunit protein uL3 from Ruthia magnifica subsp. Calyptogena magnifica.